The following is a 229-amino-acid chain: Large ribosomal subunit protein uL1 (229 aa).

This sequence belongs to the universal ribosomal protein uL1 family. Part of the 50S ribosomal subunit.

Its function is as follows. Binds directly to 23S rRNA. The L1 stalk is quite mobile in the ribosome, and is involved in E site tRNA release. Functionally, protein L1 is also a translational repressor protein, it controls the translation of the L11 operon by binding to its mRNA. This Chlorobium chlorochromatii (strain CaD3) protein is Large ribosomal subunit protein uL1.